The following is a 334-amino-acid chain: tRNA N6-adenosine threonylcarbamoyltransferase (334 aa).

2 residues coordinate Fe cation: His-112 and His-116. Substrate-binding positions include Val-135–Gly-139, Asp-168, Gly-181, Asp-185, and Asn-274. Asp-303 contributes to the Fe cation binding site.

It belongs to the KAE1 / TsaD family. The cofactor is Fe(2+).

It localises to the cytoplasm. The enzyme catalyses L-threonylcarbamoyladenylate + adenosine(37) in tRNA = N(6)-L-threonylcarbamoyladenosine(37) in tRNA + AMP + H(+). Required for the formation of a threonylcarbamoyl group on adenosine at position 37 (t(6)A37) in tRNAs that read codons beginning with adenine. Is involved in the transfer of the threonylcarbamoyl moiety of threonylcarbamoyl-AMP (TC-AMP) to the N6 group of A37, together with TsaE and TsaB. TsaD likely plays a direct catalytic role in this reaction. The chain is tRNA N6-adenosine threonylcarbamoyltransferase from Anaeromyxobacter dehalogenans (strain 2CP-C).